A 164-amino-acid chain; its full sequence is CB1 cannabinoid receptor-interacting protein 1 (164 aa).

It belongs to the CNRIP family. As to quaternary structure, interacts with the cannabinoid receptor CNR1 (via C-terminus). Does not interact with cannabinoid receptor CNR2.

Functionally, suppresses cannabinoid receptor CNR1-mediated tonic inhibition of voltage-gated calcium channels. The polypeptide is CB1 cannabinoid receptor-interacting protein 1 (CNRIP1) (Bos taurus (Bovine)).